Consider the following 166-residue polypeptide: Lipoprotein signal peptidase (166 aa).

A run of 3 helical transmembrane segments spans residues 10 to 30, 68 to 88, and 94 to 114; these read LIWL…KAWV, WQLW…AFWL, and GHWR…GNVI. Active-site residues include Asp124 and Asp142. Residues 138–158 form a helical membrane-spanning segment; the sequence is FNIADSAIVGGAIGIAVFGLF.

This sequence belongs to the peptidase A8 family.

The protein localises to the cell inner membrane. It catalyses the reaction Release of signal peptides from bacterial membrane prolipoproteins. Hydrolyzes -Xaa-Yaa-Zaa-|-(S,diacylglyceryl)Cys-, in which Xaa is hydrophobic (preferably Leu), and Yaa (Ala or Ser) and Zaa (Gly or Ala) have small, neutral side chains.. It participates in protein modification; lipoprotein biosynthesis (signal peptide cleavage). This protein specifically catalyzes the removal of signal peptides from prolipoproteins. The protein is Lipoprotein signal peptidase of Xanthomonas oryzae pv. oryzae (strain MAFF 311018).